Here is a 351-residue protein sequence, read N- to C-terminus: Probable dual-specificity RNA methyltransferase RlmN (351 aa).

The active-site Proton acceptor is the Glu-92. In terms of domain architecture, Radical SAM core spans 98 to 334 (SGDRLTVCVS…VRWSKGLGAD (237 aa)). Cys-105 and Cys-337 are joined by a disulfide. Cys-112, Cys-116, and Cys-119 together coordinate [4Fe-4S] cluster. S-adenosyl-L-methionine is bound by residues 159-160 (GE), Ser-189, 218-220 (SLH), and Asn-294. Residue Cys-337 is the S-methylcysteine intermediate of the active site.

It belongs to the radical SAM superfamily. RlmN family. It depends on [4Fe-4S] cluster as a cofactor.

The protein resides in the cytoplasm. The enzyme catalyses adenosine(2503) in 23S rRNA + 2 reduced [2Fe-2S]-[ferredoxin] + 2 S-adenosyl-L-methionine = 2-methyladenosine(2503) in 23S rRNA + 5'-deoxyadenosine + L-methionine + 2 oxidized [2Fe-2S]-[ferredoxin] + S-adenosyl-L-homocysteine. The catalysed reaction is adenosine(37) in tRNA + 2 reduced [2Fe-2S]-[ferredoxin] + 2 S-adenosyl-L-methionine = 2-methyladenosine(37) in tRNA + 5'-deoxyadenosine + L-methionine + 2 oxidized [2Fe-2S]-[ferredoxin] + S-adenosyl-L-homocysteine. In terms of biological role, specifically methylates position 2 of adenine 2503 in 23S rRNA and position 2 of adenine 37 in tRNAs. In Synechococcus sp. (strain ATCC 27144 / PCC 6301 / SAUG 1402/1) (Anacystis nidulans), this protein is Probable dual-specificity RNA methyltransferase RlmN.